The following is a 917-amino-acid chain: ABC transporter A family member 12 (917 aa).

6 helical membrane-spanning segments follow: residues 34-54, 323-343, 377-397, 409-429, 435-455, and 508-528; these read LILV…VLDA, IASL…FPVI, FLTI…AIGL, FVFY…VSSI, TVTV…SFLF, and GEVF…AYYI. The 238-residue stretch at 595 to 832 folds into the ABC transporter domain; it reads ILCDNLKKVY…YGGSYVFTMT (238 aa). Position 633–640 (633–640) interacts with ATP; it reads GPNGAGKT.

Belongs to the ABC transporter superfamily. ABCA family. CPR flippase (TC 3.A.1.211) subfamily.

The protein localises to the membrane. The polypeptide is ABC transporter A family member 12 (ABCA12) (Arabidopsis thaliana (Mouse-ear cress)).